The chain runs to 504 residues: Pup--protein ligase (504 aa).

Glutamate 30 is a binding site for Mg(2+). Arginine 74 is an ATP binding site. Mg(2+) is bound at residue tyrosine 76. Aspartate 78 (proton acceptor) is an active-site residue. Glutamate 84 contributes to the Mg(2+) binding site. The ATP site is built by threonine 87 and tryptophan 459.

It belongs to the Pup ligase/Pup deamidase family. Pup-conjugating enzyme subfamily.

The enzyme catalyses ATP + [prokaryotic ubiquitin-like protein]-L-glutamate + [protein]-L-lysine = ADP + phosphate + N(6)-([prokaryotic ubiquitin-like protein]-gamma-L-glutamyl)-[protein]-L-lysine.. It functions in the pathway protein degradation; proteasomal Pup-dependent pathway. The protein operates within protein modification; protein pupylation. In terms of biological role, catalyzes the covalent attachment of the prokaryotic ubiquitin-like protein modifier Pup to the proteasomal substrate proteins, thereby targeting them for proteasomal degradation. This tagging system is termed pupylation. The ligation reaction involves the side-chain carboxylate of the C-terminal glutamate of Pup and the side-chain amino group of a substrate lysine. This is Pup--protein ligase from Corynebacterium urealyticum (strain ATCC 43042 / DSM 7109).